We begin with the raw amino-acid sequence, 364 residues long: Pectinesterase (364 aa).

Positions 1 to 22 are cleaved as a signal peptide; that stretch reads MSCIAVEAVLLGILLYIPIVLS. A glycan (N-linked (GlcNAc...) asparagine) is linked at Asn-103. Asp-220 is a catalytic residue.

It localises to the secreted. It catalyses the reaction [(1-&gt;4)-alpha-D-galacturonosyl methyl ester](n) + n H2O = [(1-&gt;4)-alpha-D-galacturonosyl](n) + n methanol + n H(+). Its pathway is glycan metabolism; pectin degradation; 2-dehydro-3-deoxy-D-gluconate from pectin: step 1/5. In terms of biological role, catalyzes the demethylesterification of homogalacturonan components of pectin. This chain is Pectinesterase, found in Parthenium hysterophorus (Santa Maria feverfew).